The primary structure comprises 232 residues: tRNA (guanine-N(1)-)-methyltransferase (232 aa).

S-adenosyl-L-methionine-binding positions include G114 and 134-139 (IGDYIL).

This sequence belongs to the RNA methyltransferase TrmD family. As to quaternary structure, homodimer.

It localises to the cytoplasm. The enzyme catalyses guanosine(37) in tRNA + S-adenosyl-L-methionine = N(1)-methylguanosine(37) in tRNA + S-adenosyl-L-homocysteine + H(+). Functionally, specifically methylates guanosine-37 in various tRNAs. This Wolbachia pipientis subsp. Culex pipiens (strain wPip) protein is tRNA (guanine-N(1)-)-methyltransferase.